A 455-amino-acid chain; its full sequence is Keratin, type I cuticular Ha5 (455 aa).

Positions 1 to 97 (MASKCLKASF…FGEGILTGNE (97 aa)) are head. The region spanning 97–408 (EKETMQFLND…GLLDSEDCKL (312 aa)) is the IF rod domain. Residues 98-132 (KETMQFLNDRLASYLEKVRQLERENAELESRIRDW) are coil 1A. The interval 133 to 143 (CEQQVPYLCPD) is linker 1. The interval 144–244 (YQSYFQTIEE…HEEEVNSLRC (101 aa)) is coil 1B. The interval 245 to 260 (QLGDRLNVEVDAAPPV) is linker 12. A coil 2 region spans residues 261 to 404 (DLNRVLNEMR…STYRGLLDSE (144 aa)). The tail stretch occupies residues 405-455 (DCKLPCNPCAPDHSPSKSCLPCLPAASCGPGTAHTTCSPRPICVSCPGSRF).

The protein belongs to the intermediate filament family.

This chain is Keratin, type I cuticular Ha5, found in Ovis aries (Sheep).